Here is a 267-residue protein sequence, read N- to C-terminus: Undecaprenyl-diphosphatase (267 aa).

The next 7 membrane-spanning stretches (helical) occupy residues 4–24 (LYAL…ISST), 41–61 (FWKS…IFVF), 69–89 (LDIW…GLFV), 96–116 (LFNG…FILI), 173–193 (AAEF…AYSI), 207–227 (IPLG…IKFF), and 239–259 (FGIY…SGIL).

Belongs to the UppP family.

It is found in the cell inner membrane. It catalyses the reaction di-trans,octa-cis-undecaprenyl diphosphate + H2O = di-trans,octa-cis-undecaprenyl phosphate + phosphate + H(+). Its function is as follows. Catalyzes the dephosphorylation of undecaprenyl diphosphate (UPP). Confers resistance to bacitracin. The chain is Undecaprenyl-diphosphatase from Campylobacter jejuni subsp. jejuni serotype O:23/36 (strain 81-176).